The primary structure comprises 447 residues: Chromosomal replication initiator protein DnaA (447 aa).

The domain I, interacts with DnaA modulators stretch occupies residues 1 to 74; it reads MENIEELWSA…MLLEVTGSEL (74 aa). Residues 74-108 form a domain II region; the sequence is LNTKFIIPDSLEEIEEQKPMPKPKQSTDTGDSPKS. The segment at 85 to 107 is disordered; the sequence is EEIEEQKPMPKPKQSTDTGDSPK. Residues 97 to 107 show a composition bias toward polar residues; it reads KQSTDTGDSPK. The domain III, AAA+ region stretch occupies residues 109–325; the sequence is MLNSKYTFDT…GALIRVVAYS (217 aa). Residues glycine 153, glycine 155, lysine 156, and threonine 157 each coordinate ATP. The segment at 326 to 447 is domain IV, binds dsDNA; that stretch reads SLVNQDIDAS…EELKEKLKSI (122 aa).

The protein belongs to the DnaA family. Oligomerizes as a right-handed, spiral filament on DNA at oriC.

It localises to the cytoplasm. Its function is as follows. Plays an essential role in the initiation and regulation of chromosomal replication. ATP-DnaA binds to the origin of replication (oriC) to initiate formation of the DNA replication initiation complex once per cell cycle. Binds the DnaA box (a 9 base pair repeat at the origin) and separates the double-stranded (ds)DNA. Forms a right-handed helical filament on oriC DNA; dsDNA binds to the exterior of the filament while single-stranded (ss)DNA is stabiized in the filament's interior. The ATP-DnaA-oriC complex binds and stabilizes one strand of the AT-rich DNA unwinding element (DUE), permitting loading of DNA polymerase. After initiation quickly degrades to an ADP-DnaA complex that is not apt for DNA replication. Binds acidic phospholipids. This is Chromosomal replication initiator protein DnaA from Oceanobacillus iheyensis (strain DSM 14371 / CIP 107618 / JCM 11309 / KCTC 3954 / HTE831).